Reading from the N-terminus, the 66-residue chain is Truncated interferon antagonist OPG039 (66 aa).

The ANK repeat unit spans residues His29–Leu58.

Belongs to the orthopoxvirus OPG039 family.

The protein is Truncated interferon antagonist OPG039 (OPG040) of Homo sapiens (Human).